The following is a 94-amino-acid chain: Cell division protein FtsB (94 aa).

Topologically, residues 1–3 (MRV) are cytoplasmic. Residues 4–21 (FALTLSLLLVWLLYTLMW) traverse the membrane as a helical segment. At 22–94 (GKNGVMDFRA…YRIIGEESRQ (73 aa)) the chain is on the periplasmic side. Residues 33–76 (QAEIEVQQQVNANLHLRNQEMFAEIDDLRQGLDAIEERARNELG) adopt a coiled-coil conformation.

This sequence belongs to the FtsB family. As to quaternary structure, part of a complex composed of FtsB, FtsL and FtsQ.

It localises to the cell inner membrane. Essential cell division protein. May link together the upstream cell division proteins, which are predominantly cytoplasmic, with the downstream cell division proteins, which are predominantly periplasmic. The chain is Cell division protein FtsB from Vibrio cholerae serotype O1 (strain ATCC 39315 / El Tor Inaba N16961).